The following is a 363-amino-acid chain: Galactokinase (363 aa).

16–19 (EHTD) is a substrate binding site. Residues S50 and 103–109 (GSGLSSS) each bind ATP. Mg(2+) contacts are provided by S109 and E141. D153 serves as the catalytic Proton acceptor. Y205 lines the substrate pocket.

It belongs to the GHMP kinase family. GalK subfamily.

It localises to the cytoplasm. It catalyses the reaction alpha-D-galactose + ATP = alpha-D-galactose 1-phosphate + ADP + H(+). Its pathway is carbohydrate metabolism; galactose metabolism. In terms of biological role, catalyzes the transfer of the gamma-phosphate of ATP to D-galactose to form alpha-D-galactose-1-phosphate (Gal-1-P). The sequence is that of Galactokinase from Mycobacterium bovis (strain ATCC BAA-935 / AF2122/97).